A 956-amino-acid chain; its full sequence is Cytolysin RtxA (956 aa).

A cholesterol recognition/amino acid consensus (CRAC) region 1 region spans residues leucine 48–lysine 58. Cholesterol recognition/amino acid consensus (CARC) region stretches follow at residues lysine 280 to leucine 287 and lysine 340 to leucine 348. Positions leucine 349 to arginine 354 are cholesterol recognition/amino acid consensus (CRAC) region 2. The interval arginine 444 to leucine 453 is cholesterol recognition/amino acid consensus (CARC) region 3. Residue lysine 558 is the site of N6-myristoyl lysine attachment. One copy of the Hemolysin-type calcium-binding 1 repeat lies at valine 613 to arginine 639. Lysine 689 carries the N6-myristoyl lysine lipid modification. 2 Hemolysin-type calcium-binding repeats span residues glycine 722–leucine 756 and phenylalanine 757–valine 791.

It belongs to the RTX prokaryotic toxin (TC 1.C.11) family. Myristoylated by RtxC; the toxin only becomes active when modified. Mainly myristoylated; a very minor fraction is acylated with hydroxymyristoyl, lauroyl and palmitoleyl chains fatty acyl groups. Fatty acylation is involved in binding to host membranes and promotes the irreversible insertion of RtxA into the host cell membrane.

Its subcellular location is the secreted. It is found in the host cell membrane. Functionally, bacterial cytolysin that attacks host cell membranes and causes cell rupture by forming a pore. Binds and permeabilizes target cells by forming cation-selective pores. Constitutes the key virulence cytotoxin of K.kingae. Binds cholesterol and oligosaccharides on the surface of host cells. Does not bind beta-2 integrin (ITGB2) on the host cell surface. In Kingella kingae, this protein is Cytolysin RtxA.